Consider the following 423-residue polypeptide: Serine--tRNA ligase (423 aa).

Residue 231-233 (TGE) participates in L-serine binding. ATP is bound at residue 262–264 (RSE). L-serine is bound at residue E285. 349–352 (EISS) is a binding site for ATP. An L-serine-binding site is contributed by S385.

The protein belongs to the class-II aminoacyl-tRNA synthetase family. Type-1 seryl-tRNA synthetase subfamily. As to quaternary structure, homodimer. The tRNA molecule binds across the dimer.

It localises to the cytoplasm. It carries out the reaction tRNA(Ser) + L-serine + ATP = L-seryl-tRNA(Ser) + AMP + diphosphate + H(+). The catalysed reaction is tRNA(Sec) + L-serine + ATP = L-seryl-tRNA(Sec) + AMP + diphosphate + H(+). The protein operates within aminoacyl-tRNA biosynthesis; selenocysteinyl-tRNA(Sec) biosynthesis; L-seryl-tRNA(Sec) from L-serine and tRNA(Sec): step 1/1. Its function is as follows. Catalyzes the attachment of serine to tRNA(Ser). Is also able to aminoacylate tRNA(Sec) with serine, to form the misacylated tRNA L-seryl-tRNA(Sec), which will be further converted into selenocysteinyl-tRNA(Sec). The protein is Serine--tRNA ligase of Coxiella burnetii (strain CbuK_Q154) (Coxiella burnetii (strain Q154)).